Consider the following 129-residue polypeptide: MSWQEAEVRELKVGRYILIDDAPCKIVEITMSKPGKHGEAKGRIVAIGVFDNQKRSVVYPVKHKVKIPIIEKKNAQVLSVQNNEVQLMDSETFETFVLPLDPEIADKIKPGMEVPYWETMGMRKIMLQN.

Residue Lys36 is modified to Hypusine.

It belongs to the eIF-5A family.

Its subcellular location is the cytoplasm. Its function is as follows. Functions by promoting the formation of the first peptide bond. This Thermoplasma acidophilum (strain ATCC 25905 / DSM 1728 / JCM 9062 / NBRC 15155 / AMRC-C165) protein is Translation initiation factor 5A (eif5a).